The chain runs to 417 residues: RH-like protein (417 aa).

11 helical membrane-spanning segments follow: residues 12 to 32 (CLPLWALTLEAALILLFFFFT), 44 to 64 (LVASYQVCQDLTVMAVLGLGF), 77 to 97 (VAFNLFLLALGVQWAILLDGF), 125 to 145 (ISMNAVLGKVNLVQLVVMELV), 172 to 192 (IHVFAAYFGLTVAWCLPKPLP), 203 to 223 (TSPSLFAMLGTLFLWMFWPTF), 238 to 258 (VFSTYYALAVSAVTAISVSSL), 265 to 285 (INMTYMHNAALAGGVALSASC), 287 to 307 (VIHSPWIAMVLGLVAGLISIG), 331 to 351 (TFGLPALLGEITYIVLMALRV), and 358 to 378 (MIGFQVLLSTGTLSLAMAMSI).

The protein belongs to the ammonium transporter (TC 2.A.49) family. Rh subfamily.

The protein localises to the membrane. In terms of biological role, may be part of an oligomeric complex which is likely to have a transport or channel function in the erythrocyte membrane. The polypeptide is RH-like protein (Macaca mulatta (Rhesus macaque)).